A 170-amino-acid chain; its full sequence is Large ribosomal subunit protein bL17 (170 aa).

It belongs to the bacterial ribosomal protein bL17 family. In terms of assembly, part of the 50S ribosomal subunit. Contacts protein L32.

In Azobacteroides pseudotrichonymphae genomovar. CFP2, this protein is Large ribosomal subunit protein bL17.